A 335-amino-acid chain; its full sequence is tRNA N6-adenosine threonylcarbamoyltransferase (335 aa).

Residues His109, His113, and Tyr130 each contribute to the a divalent metal cation site. Substrate-binding positions include 130 to 134 (YVSGG), Asp162, Gly177, Glu181, and Asn266. Asp294 contacts a divalent metal cation.

This sequence belongs to the KAE1 / TsaD family. As to quaternary structure, component of the EKC/KEOPS complex composed of at least GON7, TP53RK, TPRKB, OSGEP and LAGE3; the whole complex dimerizes. A divalent metal cation is required as a cofactor. Widely expressed at low level. Expressed at intermediate level in lung. Weakly expressed in testis, skeletal muscle, kidney, liver, spleen, brain and heart.

It is found in the cytoplasm. It localises to the nucleus. The catalysed reaction is L-threonylcarbamoyladenylate + adenosine(37) in tRNA = N(6)-L-threonylcarbamoyladenosine(37) in tRNA + AMP + H(+). In terms of biological role, component of the EKC/KEOPS complex that is required for the formation of a threonylcarbamoyl group on adenosine at position 37 (t(6)A37) in tRNAs that read codons beginning with adenine. The complex is probably involved in the transfer of the threonylcarbamoyl moiety of threonylcarbamoyl-AMP (TC-AMP) to the N6 group of A37. OSGEP likely plays a direct catalytic role in this reaction, but requires other protein(s) of the complex to fulfill this activity. The sequence is that of tRNA N6-adenosine threonylcarbamoyltransferase (Osgep) from Mus musculus (Mouse).